The primary structure comprises 876 residues: Alanine--tRNA ligase (876 aa).

The residue at position 74 (lysine 74) is an N6-acetyllysine. Histidine 564, histidine 568, cysteine 666, and histidine 670 together coordinate Zn(2+).

It belongs to the class-II aminoacyl-tRNA synthetase family. As to quaternary structure, homotetramer. It depends on Zn(2+) as a cofactor.

The protein localises to the cytoplasm. The catalysed reaction is tRNA(Ala) + L-alanine + ATP = L-alanyl-tRNA(Ala) + AMP + diphosphate. Catalyzes the attachment of alanine to tRNA(Ala) in a two-step reaction: alanine is first activated by ATP to form Ala-AMP and then transferred to the acceptor end of tRNA(Ala). Also edits incorrectly charged Ser-tRNA(Ala) and Gly-tRNA(Ala) via its editing domain. The polypeptide is Alanine--tRNA ligase (Shigella dysenteriae serotype 1 (strain Sd197)).